The sequence spans 477 residues: Proline--tRNA ligase (477 aa).

The L-proline site is built by Thr-111, Glu-113, and Arg-142. The ATP site is built by Arg-142, Thr-153, Gln-225, and Thr-228. L-proline is bound at residue His-230. Residues Ser-262 and Arg-264 each contribute to the ATP site. Residues 340–369 (ELKGVPFRVELGPKDLEGGQAVLASRLGGK) form an interaction with tRNA region. Residues Cys-427, Cys-432, Cys-458, and Cys-461 each coordinate Zn(2+).

It belongs to the class-II aminoacyl-tRNA synthetase family. ProS type 3 subfamily. As to quaternary structure, homodimer. Only one tRNA molecule binds per dimer.

It is found in the cytoplasm. It catalyses the reaction tRNA(Pro) + L-proline + ATP = L-prolyl-tRNA(Pro) + AMP + diphosphate. In terms of biological role, catalyzes the attachment of proline to tRNA(Pro) in a two-step reaction: proline is first activated by ATP to form Pro-AMP and then transferred to the acceptor end of tRNA(Pro). Can inadvertently accommodate and process cysteine. The protein is Proline--tRNA ligase (proS) of Thermus thermophilus (strain ATCC 27634 / DSM 579 / HB8).